A 204-amino-acid chain; its full sequence is Large ribosomal subunit protein uL4 (204 aa).

Residues 49–76 (KTKGISDVSGTTAKPYGQKRTGRARQGS) are disordered.

The protein belongs to the universal ribosomal protein uL4 family. In terms of assembly, part of the 50S ribosomal subunit.

One of the primary rRNA binding proteins, this protein initially binds near the 5'-end of the 23S rRNA. It is important during the early stages of 50S assembly. It makes multiple contacts with different domains of the 23S rRNA in the assembled 50S subunit and ribosome. Functionally, forms part of the polypeptide exit tunnel. The chain is Large ribosomal subunit protein uL4 from Wolbachia sp. subsp. Drosophila simulans (strain wRi).